Reading from the N-terminus, the 132-residue chain is Small ribosomal subunit protein uS8 (132 aa).

It belongs to the universal ribosomal protein uS8 family. Part of the 30S ribosomal subunit. Contacts proteins S5 and S12.

One of the primary rRNA binding proteins, it binds directly to 16S rRNA central domain where it helps coordinate assembly of the platform of the 30S subunit. This Corynebacterium kroppenstedtii (strain DSM 44385 / JCM 11950 / CIP 105744 / CCUG 35717) protein is Small ribosomal subunit protein uS8.